A 105-amino-acid polypeptide reads, in one-letter code: Large ribosomal subunit protein uL24 (105 aa).

It belongs to the universal ribosomal protein uL24 family. Part of the 50S ribosomal subunit.

Its function is as follows. One of two assembly initiator proteins, it binds directly to the 5'-end of the 23S rRNA, where it nucleates assembly of the 50S subunit. In terms of biological role, one of the proteins that surrounds the polypeptide exit tunnel on the outside of the subunit. In Tolumonas auensis (strain DSM 9187 / NBRC 110442 / TA 4), this protein is Large ribosomal subunit protein uL24.